The primary structure comprises 315 residues: Glutathione synthetase (315 aa).

Residues 125 to 310 (KLFTAWFSDL…ITGMLMDAIE (186 aa)) form the ATP-grasp domain. Arg-256 carries N-beta-linked (GlcNAc) arginine glycosylation. Mg(2+) is bound by residues Glu-281 and Asn-283.

It belongs to the prokaryotic GSH synthase family. It depends on Mg(2+) as a cofactor. The cofactor is Mn(2+). In terms of processing, glycosylation at Arg-256 by NleB enhances the glutathione synthetase activity, leading to an increase in glutathione production. Glycosylation may promote C.rodentium survival in oxidative stress conditions.

The enzyme catalyses gamma-L-glutamyl-L-cysteine + glycine + ATP = glutathione + ADP + phosphate + H(+). It participates in sulfur metabolism; glutathione biosynthesis; glutathione from L-cysteine and L-glutamate: step 2/2. In Citrobacter rodentium, this protein is Glutathione synthetase.